Consider the following 304-residue polypeptide: HTH-type transcriptional regulator BenM (304 aa).

The 58-residue stretch at 1–58 folds into the HTH lysR-type domain; sequence MELRHLRYFVAVVEEQSFTKAADKLCIAQPPLSRQIQNLEEELGIQLLERGSRPVKTT. The segment at residues 18 to 37 is a DNA-binding region (H-T-H motif); sequence FTKAADKLCIAQPPLSRQIQ. Residues Ser-99 and Leu-104 each contribute to the benzoate site. Ser-99 lines the cis,cis-muconate pocket. Position 128 (Thr-128) interacts with cis,cis-muconate. Residues Phe-144, Arg-160, and Asn-202 each contribute to the benzoate site. Position 203 (Phe-203) interacts with cis,cis-muconate. Tyr-293 provides a ligand contact to benzoate.

It belongs to the LysR transcriptional regulatory family. In terms of assembly, homotetramer; dimer of dimers. The dimers can also associate to form linear, higher oligomers (in vitro).

Positive regulator of the ben and cat genes for benzoate degradation. BenM is necessary for ben gene expression but not for expression of the cat genes, which can be regulated by CatM. Binds to the inducers cis,cis-muconate and benzoate. This Acinetobacter baylyi (strain ATCC 33305 / BD413 / ADP1) protein is HTH-type transcriptional regulator BenM (benM).